The chain runs to 135 residues: uncharacterized protein (135 aa).

This sequence belongs to the transcriptional regulatory CopG/NikR family.

This is an uncharacterized protein from Methanocaldococcus jannaschii (strain ATCC 43067 / DSM 2661 / JAL-1 / JCM 10045 / NBRC 100440) (Methanococcus jannaschii).